The primary structure comprises 134 residues: Crustacean hyperglycemic hormones isoform A (134 aa).

Positions 1 to 24 (MMACRTLCLVVVMVASLGTSGVGG) are cleaved as a signal peptide. Gln61 is modified (pyrrolidone carboxylic acid). Phe63 carries the post-translational modification D-phenylalanine; in form CHH-A-II. Cystine bridges form between Cys67/Cys103, Cys83/Cys99, and Cys86/Cys112. Val132 bears the Valine amide mark.

This sequence belongs to the arthropod CHH/MIH/GIH/VIH hormone family. Stereoinversion of L-Phe (form CHH-A-I) to D-Phe (form CHH-A-II). Produced by the medulla terminalis X-organ in the eyestalks and transported to the sinus gland where they are stored and released. Present also in the ventral nervous system.

It localises to the secreted. Functionally, CHH is the most abundant hormone in the sinus gland of isopods and decapods which controls the blood sugar level. Has a secretagogue action over the amylase released from the midgut gland. May act as a stress hormone. Its function is as follows. MIH may inhibit Y-organs where molting hormone (ecdysteroid) is secreted and a molting cycle is initiated when MIH secretion diminishes or stops. This is Crustacean hyperglycemic hormones isoform A from Homarus americanus (American lobster).